The sequence spans 122 residues: SLFELGKMILQETGKNPAKSYGVYGCNCGVGGRGKPKDATDRCCYVHKCCYKKLTGCDPKKDRYSYSWKDKTIVCGENNSCLKELCECDKAVAICLRENLDTYNKKYRYNYLKPFCKKADPC.

7 cysteine pairs are disulfide-bonded: Cys26–Cys116, Cys28–Cys44, Cys43–Cys95, Cys49–Cys122, Cys50–Cys88, Cys57–Cys81, and Cys75–Cys86. Residues Lys105 to Lys118 are important for membrane-damaging activities in eukaryotes and bacteria; heparin-binding.

It belongs to the phospholipase A2 family. Group II subfamily. K49 sub-subfamily. In terms of assembly, homodimer; non-covalently linked (probable alternative/compact dimer conformation). As to expression, expressed by the venom gland.

The protein localises to the secreted. With respect to regulation, myotoxic activity is inhibited by suramin and rosmarinic acid. Cytotoxic and myotoxic activities are inhibited by pre-incubation with varespladib. Suramin inhibits this myotoxin by (i) direct blockage of the MDoS and MDiS, preventing the toxin/membrane interaction and disruption and (ii) formation of an oligomeric complex, resulting in a tetrameric configuration for which both MDoS and MDiS becomes physically inaccessible, thus avoiding any possibility of toxin-membrane interaction or disruption. Heparin completely inhibits the cytotoxic and bactericidal activities, but only partially the myotoxic, edema-inducing and lethal effects. Functionally, snake venom phospholipase A2 (PLA2) homolog that lacks enzymatic activity. Shows high myotoxin activities. Also shows neurotoxicity, since it induces muscle paralysis when tested on mouse phrenic-diaphragm preparations. Displays edema-inducing activities. Also displays antimicrobial activity against E.coli and C.albicans, as well as antitumoral activity against some human and mice cell lines. In addition, it is effective as parasiticidal agent against Leishmania sp. and S.mansoni. It also disrupts negatively charged liposomes in a dose- and temperature-dependent manner and shows toxicity by intraperitoneal route. In contrast to other phospholipase A2-like toxins, this myotoxin does not require fatty acid binding to be active. This chain is Basic phospholipase A2 homolog myotoxin II, found in Bothrops moojeni (Lance-headed viper).